Reading from the N-terminus, the 644-residue chain is ATP-dependent zinc metalloprotease FtsH (644 aa).

At 1–11 (MNDNKNNTVRN) the chain is on the stromal side. Residues 12–32 (LLIGIALLSGISLTAKKFDLI) form a helical membrane-spanning segment. Over 33–128 (GVQGSESGKN…FDAHPAEQKN (96 aa)) the chain is Lumenal. The chain crosses the membrane as a helical span at residues 129–149 (IFVNILSNILLPIIFITGLVY). At 150 to 644 (LFQNSENFGG…KNIPYVSKFN (495 aa)) the chain is on the stromal side. 226–233 (GPPGTGKT) provides a ligand contact to ATP. His447 lines the Zn(2+) pocket. The active site involves Glu448. Zn(2+) is bound by residues His451 and Asp525.

The protein in the central section; belongs to the AAA ATPase family. In the C-terminal section; belongs to the peptidase M41 family. Homohexamer. The cofactor is Zn(2+).

Its subcellular location is the plastid. It is found in the chloroplast thylakoid membrane. In terms of biological role, acts as a processive, ATP-dependent zinc metallopeptidase. The chain is ATP-dependent zinc metalloprotease FtsH from Trieres chinensis (Marine centric diatom).